The following is a 376-amino-acid chain: MSGKMNEWESLNTTLNRFTDNVVKFRRDSRTKALKCWRPIVDGIVDYVKRKDDRFHALSVFHKGSYYERSKVGEPDEFDLMLVMDNLELYDEPFEEDDGLSEPPIGFTTVMIDQGEEKPWKRDECVNRRGMLNATRVKAVFKRLADEAIQDMKSKGHWRNVTVKSGGTAVTLKISKDGREYSVDLTLGIKDNTWPEDAEEWKTRQRKGWPKRNLVHDIHEMGCHLVTKQPKGHSPIEQERGFLWCYSFSEAEKKLFLQGEQGEVNSCRRQVLRILKALREELELQPLKSYHLKTLLLYECESQPSARQWSKDALSERFLDLLKRLEKCLRSKECPHYFIKDLNLFEMLNPEKCDELADRVNKILKQPGQVLIRLIK.

2 residues coordinate Mg(2+): E77 and D79.

It belongs to the mab-21 family. It depends on Mg(2+) as a cofactor. Mn(2+) serves as cofactor.

It carries out the reaction UTP + ATP = 3',3'-cUAMP + 2 diphosphate. Its function is as follows. Nucleotidyltransferase that catalyzes the formation of cyclic UMP-AMP (3',3'-cUAMP) from ATP and UTP and plays a key role in innate immunity. Acts as a key sensor of double-stranded RNA (dsRNA), the presence of dsRNA in the cytoplasm being a danger signal that triggers the immune responses. Directly binds dsRNA, activating the nucleotidyltransferase activity, leading to synthesis of 3',3'-cUAMP, a second messenger that binds to and activates Sting, thereby triggering the immune response via activation of the NF-kappa-B transcription factor. In Stylophora pistillata (Smooth cauliflower coral), this protein is Cyclic GMP-AMP synthase-like receptor 1.